An 85-amino-acid polypeptide reads, in one-letter code: Small ribosomal subunit protein bS16c (85 aa).

It belongs to the bacterial ribosomal protein bS16 family.

Its subcellular location is the plastid. It is found in the chloroplast. The chain is Small ribosomal subunit protein bS16c from Agrostis stolonifera (Creeping bentgrass).